The following is a 127-amino-acid chain: Evasin P467 (127 aa).

The N-terminal stretch at 1-21 (MALKACITVIAVVYVVQVVRG) is a signal peptide. 4 disulfides stabilise this stretch: cysteine 42–cysteine 63, cysteine 59–cysteine 100, cysteine 76–cysteine 105, and cysteine 95–cysteine 114. N-linked (GlcNAc...) asparagine glycans are attached at residues asparagine 49 and asparagine 94.

It localises to the secreted. Salivary chemokine-binding protein which binds to host chemokines CCL1, CCL2, CCL3 and CCL5. The protein is Evasin P467 of Rhipicephalus pulchellus (Yellow backed tick).